The primary structure comprises 163 residues: ATP synthase subunit b (163 aa).

A helical membrane pass occupies residues 1–21 (MISFNLTSIVNLVGFLAFMFL).

This sequence belongs to the ATPase B chain family. F-type ATPases have 2 components, F(1) - the catalytic core - and F(0) - the membrane proton channel. F(1) has five subunits: alpha(3), beta(3), gamma(1), delta(1), epsilon(1). F(0) has three main subunits: a(1), b(2) and c(10-14). The alpha and beta chains form an alternating ring which encloses part of the gamma chain. F(1) is attached to F(0) by a central stalk formed by the gamma and epsilon chains, while a peripheral stalk is formed by the delta and b chains.

It localises to the cell inner membrane. In terms of biological role, f(1)F(0) ATP synthase produces ATP from ADP in the presence of a proton or sodium gradient. F-type ATPases consist of two structural domains, F(1) containing the extramembraneous catalytic core and F(0) containing the membrane proton channel, linked together by a central stalk and a peripheral stalk. During catalysis, ATP synthesis in the catalytic domain of F(1) is coupled via a rotary mechanism of the central stalk subunits to proton translocation. Its function is as follows. Component of the F(0) channel, it forms part of the peripheral stalk, linking F(1) to F(0). This chain is ATP synthase subunit b, found in Petrotoga mobilis (strain DSM 10674 / SJ95).